The following is a 1261-amino-acid chain: AT-rich interactive domain-containing protein 4A (1261 aa).

A DNA-binding region spans residues 4 to 121; it reads ADEPAYLTVG…RHFAESETLD (118 aa). 3 disordered regions span residues 142 to 169, 273 to 310, and 435 to 470; these read RGRR…DKRR, ESSS…LDPE, and APEM…PRGR. Composition is skewed to acidic residues over residues 151-165 and 276-289; these read TEDE…EEDE and SSDD…EHEE. Positions 290–299 are enriched in basic and acidic residues; sequence EKEKEAKKEE. Acidic residues predominate over residues 300–310; that stretch reads EELPEEELDPE. One can recognise an ARID domain in the interval 309 to 401; sequence PEERDNFLQQ…YLYGFEEYCR (93 aa). Lys-481 participates in a covalent cross-link: Glycyl lysine isopeptide (Lys-Gly) (interchain with G-Cter in SUMO2). Disordered stretches follow at residues 498 to 582, 633 to 768, and 842 to 953; these read LENK…GTKV, WPLD…EAGD, and FSST…EDAM. Residues 512-522 are compositionally biased toward basic and acidic residues; that stretch reads PAAKREHELLF. A compositionally biased stretch (basic residues) spans 526–536; that stretch reads STPKNKEKKIK. Over residues 541-551 the composition is skewed to acidic residues; the sequence is SERDSDEEEEK. Over residues 552-564 the composition is skewed to basic and acidic residues; sequence SQEREETESRCDS. Positions 565-574 are enriched in acidic residues; sequence EGEDEEDDTE. In terms of domain architecture, Tudor-knot spans 579–631; sequence GTKVKVKYGRGKTQKIYEASIKSTEMDDGEILYLVHYYGWNVRYDEWVKADRI. Basic residues predominate over residues 640-649; sequence PKKKQKKKVK. The span at 650–665 shows a compositional bias: basic and acidic residues; that stretch reads NKEDSEKDEKRDEERQ. Residues 676–689 are compositionally biased toward polar residues; the sequence is STFSPNMPYSLSKT. Phosphoserine is present on Ser-679. Positions 690–702 are enriched in low complexity; the sequence is SNSEGKSDSCSSD. A compositionally biased stretch (basic and acidic residues) spans 708-753; it reads QLEKSSGGEDLSPDVKEELEKNENAHDDKLDEENPKIVHISKENDR. Ser-719 carries the phosphoserine modification. Glycyl lysine isopeptide (Lys-Gly) (interchain with G-Cter in SUMO2) cross-links involve residues Lys-723 and Lys-743. Ser-867 carries the phosphoserine modification. Basic and acidic residues-rich tracts occupy residues 899–909 and 929–947; these read KGAHVEQHFET and TSEK…TPLK. The interval 955-968 is retinoblastoma protein binding; sequence LIGPETLVCHEVDL. Residues 1067–1080 show a composition bias toward basic and acidic residues; sequence HERESREKGQKRPS. Disordered regions lie at residues 1067–1173 and 1216–1261; these read HERE…RTYK and RRRK…VECR. Ser-1113 and Ser-1149 each carry phosphoserine. The segment covering 1230-1252 has biased composition (low complexity); sequence HAGASMSSASSDTGMSPSSSSPP.

Identified in mSin3A corepressor complexes together with SIN3A, SIN3B, RBBP4, RBBP7, SAP30, BRMS1, HDAC1 and HDAC2. Interacts with BRMS1. Interacts with RB1. Interacts with ARID4B. Interacts with AR. Expressed in Sertoli cells of the testis.

The protein resides in the nucleus. Functionally, DNA-binding protein which modulates activity of several transcription factors including RB1 (retinoblastoma-associated protein) and AR (androgen receptor). May function as part of an mSin3A repressor complex. Has no intrinsic transcriptional activity. Plays a role in the regulation of epigenetic modifications at the PWS/AS imprinting center near the SNRPN promoter, where it might function as part of a complex with RB1 and ARID4B. Involved in spermatogenesis, together with ARID4B, where it acts as a transcriptional coactivator for AR and enhances expression of genes required for sperm maturation. Regulates expression of the tight junction protein CLDN3 in the testis, which is important for integrity of the blood-testis barrier. Plays a role in myeloid homeostasis where it regulates the histone methylation state of bone marrow cells and expression of various genes involved in hematopoiesis. May function as a leukemia suppressor. The chain is AT-rich interactive domain-containing protein 4A from Mus musculus (Mouse).